A 138-amino-acid polypeptide reads, in one-letter code: Putative acyl-CoA thioesterase YneP (138 aa).

Asp-16 is a catalytic residue.

This sequence belongs to the 4-hydroxybenzoyl-CoA thioesterase family.

Its function is as follows. Has acyl-CoA thioesterase activity. The protein is Putative acyl-CoA thioesterase YneP (yneP) of Bacillus subtilis (strain 168).